The primary structure comprises 119 residues: Protein TusC (119 aa).

Belongs to the DsrF/TusC family. Heterohexamer, formed by a dimer of trimers. The hexameric TusBCD complex contains 2 copies each of TusB, TusC and TusD. The TusBCD complex interacts with TusE.

The protein localises to the cytoplasm. Part of a sulfur-relay system required for 2-thiolation of 5-methylaminomethyl-2-thiouridine (mnm(5)s(2)U) at tRNA wobble positions. The polypeptide is Protein TusC (Shigella dysenteriae serotype 1 (strain Sd197)).